The primary structure comprises 242 residues: E3 ubiquitin-protein ligase ZNRF2 (242 aa).

The disordered stretch occupies residues 1 to 141 (MGAKQSGPAA…VGGSPGGPRL (141 aa)). A lipid anchor (N-myristoyl glycine) is attached at glycine 2. Phosphoserine is present on residues serine 19, serine 21, and serine 25. Low complexity predominate over residues 19–29 (SGSDLPSSSSG). Residues 30–41 (GANGTAGGGGGA) show a composition bias toward gly residues. Over residues 59–97 (PSASGGAAAAAAAPAAPAAPRSRSLGGAVGSVASGARAA) the composition is skewed to low complexity. A phosphoserine mark is found at serine 82, serine 89, serine 113, serine 116, and serine 135. A compositionally biased stretch (polar residues) spans 99–118 (SPFSIPNSSSGPYGSQDSVH). At serine 145 the chain carries Phosphoserine; by MTOR. Serine 151 and serine 193 each carry phosphoserine. The RING-type; atypical zinc-finger motif lies at 199 to 240 (CAICLEELQQGDTIARLPCLCIYHKGCIDEWFEVNRSCPEHP).

Interacts with UBE2N. Interacts with ZNRF1. Interacts (when phosphorylated) with YWHAE. In terms of processing, phosphorylated; leading to binding to YWHAE. Phosphorylated by MTOR at Ser-145 and dephosphorylated by PP6C. Ser-145 phosphorylation stimulates vesicle-to-cytosol translocation. Highly expressed in the brain, with higher expression during development than in adult. Expressed also in mammary glands, testis, colon and kidney.

Its subcellular location is the endosome membrane. The protein localises to the lysosome membrane. It is found in the presynaptic cell membrane. It localises to the cytoplasm. It catalyses the reaction S-ubiquitinyl-[E2 ubiquitin-conjugating enzyme]-L-cysteine + [acceptor protein]-L-lysine = [E2 ubiquitin-conjugating enzyme]-L-cysteine + N(6)-ubiquitinyl-[acceptor protein]-L-lysine.. Its pathway is protein modification; protein ubiquitination. In terms of biological role, E3 ubiquitin-protein ligase that plays a role in the establishment and maintenance of neuronal transmission and plasticity. Ubiquitinates the Na(+)/K(+) ATPase alpha-1 subunit/ATP1A1 and thereby influences its endocytosis and/or degradation. Acts also as a positive regulator of mTORC1 activation by amino acids, which functions upstream of the V-ATPase and of Rag-GTPases. In turn, phosphorylation by mTOR leads to its inhibition via targeting to the cytosol allowing a self-regulating feedback mechanism. This Homo sapiens (Human) protein is E3 ubiquitin-protein ligase ZNRF2 (ZNRF2).